Reading from the N-terminus, the 690-residue chain is Elongation factor G (690 aa).

One can recognise a tr-type G domain in the interval 8–282; that stretch reads ERVRNIGIAA…AVIDYLPAPV (275 aa). GTP-binding positions include 17 to 24, 81 to 85, and 135 to 138; these read AHIDAGKT, DTPGH, and NKMD.

It belongs to the TRAFAC class translation factor GTPase superfamily. Classic translation factor GTPase family. EF-G/EF-2 subfamily.

The protein localises to the cytoplasm. Functionally, catalyzes the GTP-dependent ribosomal translocation step during translation elongation. During this step, the ribosome changes from the pre-translocational (PRE) to the post-translocational (POST) state as the newly formed A-site-bound peptidyl-tRNA and P-site-bound deacylated tRNA move to the P and E sites, respectively. Catalyzes the coordinated movement of the two tRNA molecules, the mRNA and conformational changes in the ribosome. The protein is Elongation factor G of Parasynechococcus marenigrum (strain WH8102).